The chain runs to 86 residues: Putative protein adenylyltransferase MJ1215 (86 aa).

The GSX(10)DXD motif motif lies at 35–49; sequence GSYARGEQKETSDID. Positions 47, 49, and 79 each coordinate Mg(2+).

Belongs to the MntA antitoxin family. As to quaternary structure, probably forms a complex with cognate toxin MJ1216. Mg(2+) is required as a cofactor.

The enzyme catalyses L-tyrosyl-[protein] + ATP = O-(5'-adenylyl)-L-tyrosyl-[protein] + diphosphate. It carries out the reaction O-(5'-adenylyl)-L-tyrosyl-[protein] + ATP = O-[5'-(adenylyl-(5'-&gt;3')-adenylyl)]-L-tyrosyl-[protein] + diphosphate. Probable antitoxin component of a putative type VII toxin-antitoxin (TA) system. Neutralizes cognate toxic MJ1216 by di-AMPylation. The polypeptide is Putative protein adenylyltransferase MJ1215 (Methanocaldococcus jannaschii (strain ATCC 43067 / DSM 2661 / JAL-1 / JCM 10045 / NBRC 100440) (Methanococcus jannaschii)).